A 1097-amino-acid polypeptide reads, in one-letter code: DNA-directed RNA polymerase subunit beta (1097 aa).

Residues Gln-1072 to Asp-1097 are disordered. A compositionally biased stretch (polar residues) spans Arg-1077–Thr-1091.

The protein belongs to the RNA polymerase beta chain family. In terms of assembly, in cyanobacteria the RNAP catalytic core is composed of 2 alpha, 1 beta, 1 beta', 1 gamma and 1 omega subunit. When a sigma factor is associated with the core the holoenzyme is formed, which can initiate transcription.

The catalysed reaction is RNA(n) + a ribonucleoside 5'-triphosphate = RNA(n+1) + diphosphate. DNA-dependent RNA polymerase catalyzes the transcription of DNA into RNA using the four ribonucleoside triphosphates as substrates. The protein is DNA-directed RNA polymerase subunit beta of Prochlorococcus marinus (strain MIT 9301).